Here is a 692-residue protein sequence, read N- to C-terminus: Hexamerin-1.1 (692 aa).

The N-terminal stretch at 1-18 (MKLLILAVAISLAVLASG) is a signal peptide. Asn-203 carries an N-linked (GlcNAc...) asparagine glycan.

This sequence belongs to the hemocyanin family. As to quaternary structure, homohexamer. In terms of tissue distribution, larval fat body.

It is found in the secreted. The protein resides in the extracellular space. In terms of biological role, larval storage protein (LSP) which may serve as a store of amino acids for synthesis of adult proteins. The polypeptide is Hexamerin-1.1 (HexA) (Anopheles gambiae (African malaria mosquito)).